A 319-amino-acid chain; its full sequence is ATP-dependent 6-phosphofructokinase (319 aa).

Position 11 (G11) interacts with ATP. 21-25 (RAVVR) contacts ADP. Residues 72-73 (RC) and 102-105 (GDGS) each bind ATP. D103 lines the Mg(2+) pocket. Residue 125–127 (TID) participates in substrate binding. The active-site Proton acceptor is the D127. ADP is bound at residue R154. Substrate-binding positions include R162 and 169 to 171 (MGR). Residues 185–187 (GAE), R211, and 213–215 (KKH) contribute to the ADP site. Residues E222, R243, and 249–252 (HIQR) each bind substrate.

It belongs to the phosphofructokinase type A (PFKA) family. ATP-dependent PFK group I subfamily. Prokaryotic clade 'B1' sub-subfamily. As to quaternary structure, homotetramer. Mg(2+) is required as a cofactor.

Its subcellular location is the cytoplasm. The enzyme catalyses beta-D-fructose 6-phosphate + ATP = beta-D-fructose 1,6-bisphosphate + ADP + H(+). It functions in the pathway carbohydrate degradation; glycolysis; D-glyceraldehyde 3-phosphate and glycerone phosphate from D-glucose: step 3/4. Allosterically activated by ADP and other diphosphonucleosides, and allosterically inhibited by phosphoenolpyruvate. Functionally, catalyzes the phosphorylation of D-fructose 6-phosphate to fructose 1,6-bisphosphate by ATP, the first committing step of glycolysis. This is ATP-dependent 6-phosphofructokinase from Halalkalibacterium halodurans (strain ATCC BAA-125 / DSM 18197 / FERM 7344 / JCM 9153 / C-125) (Bacillus halodurans).